Consider the following 257-residue polypeptide: Uracil phosphoribosyltransferase (257 aa).

5-phospho-alpha-D-ribose 1-diphosphate contacts are provided by residues arginine 77, arginine 102, and 129 to 137 (DPMLATGGS). Uracil-binding positions include isoleucine 192 and 197 to 199 (GDA). A 5-phospho-alpha-D-ribose 1-diphosphate-binding site is contributed by aspartate 198. A disordered region spans residues 203–257 (QFGPNLFTSSAPSRPEAPAGRGRAAAKTPGRRSARSESPSSTSPSARSRKAAPPA). Composition is skewed to low complexity over residues 211-230 (SSAPSRPEAPAGRGRAAAKT) and 238-248 (SESPSSTSPSA).

This sequence belongs to the UPRTase family. The cofactor is Mg(2+).

The catalysed reaction is UMP + diphosphate = 5-phospho-alpha-D-ribose 1-diphosphate + uracil. Its pathway is pyrimidine metabolism; UMP biosynthesis via salvage pathway; UMP from uracil: step 1/1. Its activity is regulated as follows. Allosterically activated by GTP. Its function is as follows. Catalyzes the conversion of uracil and 5-phospho-alpha-D-ribose 1-diphosphate (PRPP) to UMP and diphosphate. In Mycolicibacterium paratuberculosis (strain ATCC BAA-968 / K-10) (Mycobacterium paratuberculosis), this protein is Uracil phosphoribosyltransferase.